The primary structure comprises 62 residues: MAKTIVIKQIGSPIRRPAKQRATLIGLGLNKMHKTRELEDTPSVRGMINSIPHMVEIVEEKG.

Belongs to the universal ribosomal protein uL30 family. Part of the 50S ribosomal subunit.

This chain is Large ribosomal subunit protein uL30, found in Roseobacter denitrificans (strain ATCC 33942 / OCh 114) (Erythrobacter sp. (strain OCh 114)).